Here is a 1225-residue protein sequence, read N- to C-terminus: uncharacterized protein (1225 aa).

Residues 1–27 (MKRFLHRVKWPLLLSSIAVSLGIVAVA) form the signal peptide. Cysteine 28 carries the N-palmitoyl cysteine lipid modification. The S-diacylglycerol cysteine moiety is linked to residue cysteine 28. Residues 995-1014 (QSEKSSSNGGQAQLQSTQSS) are disordered.

It belongs to the MG307/MG309/MG338 family.

It is found in the cell membrane. This is an uncharacterized protein from Mycoplasma genitalium (strain ATCC 33530 / DSM 19775 / NCTC 10195 / G37) (Mycoplasmoides genitalium).